The primary structure comprises 319 residues: Lipoyl synthase (319 aa).

The tract at residues 1-32 (MVVLVDTVSSTPVRPRHPEKAARPDSLSPKKP) is disordered. Residues 16-32 (RHPEKAARPDSLSPKKP) show a composition bias toward basic and acidic residues. [4Fe-4S] cluster contacts are provided by cysteine 61, cysteine 66, cysteine 72, cysteine 87, cysteine 91, cysteine 94, and serine 300. A Radical SAM core domain is found at 73–289 (WDKKHATFMI…GKTAYAKGFL (217 aa)).

This sequence belongs to the radical SAM superfamily. Lipoyl synthase family. [4Fe-4S] cluster is required as a cofactor.

It localises to the cytoplasm. It carries out the reaction [[Fe-S] cluster scaffold protein carrying a second [4Fe-4S](2+) cluster] + N(6)-octanoyl-L-lysyl-[protein] + 2 oxidized [2Fe-2S]-[ferredoxin] + 2 S-adenosyl-L-methionine + 4 H(+) = [[Fe-S] cluster scaffold protein] + N(6)-[(R)-dihydrolipoyl]-L-lysyl-[protein] + 4 Fe(3+) + 2 hydrogen sulfide + 2 5'-deoxyadenosine + 2 L-methionine + 2 reduced [2Fe-2S]-[ferredoxin]. The protein operates within protein modification; protein lipoylation via endogenous pathway; protein N(6)-(lipoyl)lysine from octanoyl-[acyl-carrier-protein]: step 2/2. Its function is as follows. Catalyzes the radical-mediated insertion of two sulfur atoms into the C-6 and C-8 positions of the octanoyl moiety bound to the lipoyl domains of lipoate-dependent enzymes, thereby converting the octanoylated domains into lipoylated derivatives. The polypeptide is Lipoyl synthase (Rhodopseudomonas palustris (strain BisB5)).